We begin with the raw amino-acid sequence, 592 residues long: Beta-fructofuranosidase, insoluble isoenzyme 2 (592 aa).

The N-terminal stretch at 1-40 (MLIRCFHIKMALVTCFHSMLFLSAVVFIFSLDVNIRGVEA) is a signal peptide. The active site involves Asp-75. N-linked (GlcNAc...) asparagine glycosylation is found at Asn-171, Asn-195, Asn-310, Asn-347, and Asn-568.

The protein belongs to the glycosyl hydrolase 32 family.

It is found in the secreted. The protein resides in the cell wall. It catalyses the reaction Hydrolysis of terminal non-reducing beta-D-fructofuranoside residues in beta-D-fructofuranosides.. In terms of biological role, may play an important role in phloem unloading and in stress response. The chain is Beta-fructofuranosidase, insoluble isoenzyme 2 (INV2) from Daucus carota (Wild carrot).